Reading from the N-terminus, the 111-residue chain is Large ribosomal subunit protein P2 (111 aa).

Positions 63 to 84 are enriched in low complexity; the sequence is ASMPTGGAPAAAAGGAATAPAA. The interval 63 to 111 is disordered; it reads ASMPTGGAPAAAAGGAATAPAAEAKEAKKEEKKEESEEEDEDMGFGLFD. Basic and acidic residues predominate over residues 85 to 97; sequence EAKEAKKEEKKEE. Ser98 carries the post-translational modification Phosphoserine.

As to quaternary structure, part of the ribosomal stalk of the large ribosomal subunit; P1 and P2 exist as dimers which assemble on the P0 scaffold.

Plays an important role in the elongation step of protein synthesis. The protein is Large ribosomal subunit protein P2 of Artemia salina (Brine shrimp).